Consider the following 140-residue polypeptide: Putative nickel-responsive regulator 2 (140 aa).

Positions 77, 88, 90, and 96 each coordinate Ni(2+).

It belongs to the transcriptional regulatory CopG/NikR family. The cofactor is Ni(2+).

Transcriptional regulator. The protein is Putative nickel-responsive regulator 2 of Methanothermobacter thermautotrophicus (strain ATCC 29096 / DSM 1053 / JCM 10044 / NBRC 100330 / Delta H) (Methanobacterium thermoautotrophicum).